Consider the following 199-residue polypeptide: NAD(P)H dehydrogenase (quinone) (199 aa).

One can recognise a Flavodoxin-like domain in the interval 4-190; that stretch reads ILVLYYSMYG…KIARYQGEHV (187 aa). Residues 10-15 and 79-81 contribute to the FMN site; these read SMYGHI and TRF. Tyr-12 serves as a coordination point for NAD(+). Trp-99 is a binding site for substrate. Residue His-134 coordinates FMN.

It belongs to the WrbA family. The cofactor is FMN.

It carries out the reaction a quinone + NADH + H(+) = a quinol + NAD(+). It catalyses the reaction a quinone + NADPH + H(+) = a quinol + NADP(+). The polypeptide is NAD(P)H dehydrogenase (quinone) (Photorhabdus laumondii subsp. laumondii (strain DSM 15139 / CIP 105565 / TT01) (Photorhabdus luminescens subsp. laumondii)).